The following is a 290-amino-acid chain: Transposon Ty3-G Gag polyprotein (290 aa).

S2 is subject to N-acetylserine. A CCHC-type zinc finger spans residues 265-282 (RLCFYCKKEGHRLNECRA).

The protein resides in the cytoplasm. Functionally, capsid protein (CA) is the structural component of the virus-like particle (VLP), forming the shell that encapsulates the retrotransposons dimeric RNA genome. Nucleocapsid protein p9 (NC) forms the nucleocore that coats the retro-elements dimeric RNA. Binds these RNAs through its zinc fingers. Promotes primer tRNA(i)-Met annealing to the multipartite primer-binding site (PBS), dimerization of Ty3 RNA and initiation of reverse transcription. This is Transposon Ty3-G Gag polyprotein (TY3A-G) from Saccharomyces cerevisiae (strain ATCC 204508 / S288c) (Baker's yeast).